The sequence spans 403 residues: L-cysteine:1D-myo-inositol 2-amino-2-deoxy-alpha-D-glucopyranoside ligase (403 aa).

Cys43 is a Zn(2+) binding site. L-cysteinyl-5'-AMP-binding positions include 43-46, Thr58, 81-83, and Trp223; these read CGIT and NVT. Residues 45–55 carry the 'HIGH' region motif; sequence ITPYDATHLGH. Residue Cys227 participates in Zn(2+) binding. An L-cysteinyl-5'-AMP-binding site is contributed by 245–247; that stretch reads GAD. Residue His252 participates in Zn(2+) binding. Val278 serves as a coordination point for L-cysteinyl-5'-AMP. The 'KMSKS' region motif lies at 284 to 288; that stretch reads KMSKS.

This sequence belongs to the class-I aminoacyl-tRNA synthetase family. MshC subfamily. In terms of assembly, monomer. Requires Zn(2+) as cofactor.

It catalyses the reaction 1D-myo-inositol 2-amino-2-deoxy-alpha-D-glucopyranoside + L-cysteine + ATP = 1D-myo-inositol 2-(L-cysteinylamino)-2-deoxy-alpha-D-glucopyranoside + AMP + diphosphate + H(+). Functionally, catalyzes the ATP-dependent condensation of GlcN-Ins and L-cysteine to form L-Cys-GlcN-Ins. This chain is L-cysteine:1D-myo-inositol 2-amino-2-deoxy-alpha-D-glucopyranoside ligase, found in Acidothermus cellulolyticus (strain ATCC 43068 / DSM 8971 / 11B).